We begin with the raw amino-acid sequence, 301 residues long: Vomeronasal type-1 receptor 4 (301 aa).

At 1–15 (MASRYVAVGMMLSQT) the chain is on the extracellular side. Residues 16–36 (VVGVLGSFSLLLHYLSLHYIG) form a helical membrane-spanning segment. The Cytoplasmic segment spans residues 37–48 (CRLRSADLIVKH). Residues 49 to 69 (LIAASFLTLLCKGVPQTMAAF) traverse the membrane as a helical segment. Residues 70–88 (RVRYFLNAIGCKLVFYLHR) lie on the Extracellular side of the membrane. A helical membrane pass occupies residues 89 to 107 (VGRGVSTGTTCLLSVFQVI). The Cytoplasmic portion of the chain corresponds to 108 to 126 (TVSSRKSRWAKLKEKAPKH). The chain crosses the membrane as a helical span at residues 127–147 (VGFSVLLCWILCMLVNIIFPI). Residues 148–185 (YVTGKRNHTNITVNKDLGDCCGRGNNKIAQTLRAMLLS) are Extracellular-facing. N-linked (GlcNAc...) asparagine glycosylation is found at Asn-154 and Asn-157. The helical transmembrane segment at 186 to 206 (FPDVLCLGFMLWASSSMVCIL) threads the bilayer. Over 207–234 (HRHKQRVQHIHRSNLSPRASPENRATQS) the chain is Cytoplasmic. The chain crosses the membrane as a helical span at residues 235–255 (ILIPVSTFVSSYTLSCLLQVC). Topologically, residues 256–264 (MALLDNPNS) are extracellular. Residues 265–285 (LLVNTSALMSACFPTLSPFVL) traverse the membrane as a helical segment. Topologically, residues 286-301 (MSCDPSVYRLCFAWKR) are cytoplasmic.

This sequence belongs to the G-protein coupled receptor 1 family.

The protein resides in the cell membrane. Its function is as follows. Putative pheromone receptor. The sequence is that of Vomeronasal type-1 receptor 4 (VN1R4) from Pongo pygmaeus (Bornean orangutan).